Reading from the N-terminus, the 741-residue chain is uncharacterized protein (741 aa).

5 helical membrane passes run 34–54, 76–96, 120–140, 156–176, and 187–207; these read WLLW…LLII, LIIP…FING, LAVL…FVSL, LSVF…LIII, and LLLL…AFSI. Basic and acidic residues predominate over residues 404–423; the sequence is EAEEKERQEKEEKEKAEKDN. Disordered stretches follow at residues 404–473 and 555–647; these read EAEE…FRPR and QKEL…ENAK. Residues 424 to 439 show a composition bias toward polar residues; the sequence is GNGQDSNKVNSVSTEP. Composition is skewed to basic and acidic residues over residues 445–465 and 555–573; these read SDAD…DSSK and QKEL…DQKS. A compositionally biased stretch (acidic residues) spans 623–643; that stretch reads DNTDESEDKQSEEEEKFDEEI. The next 2 helical transmembrane spans lie at 655–675 and 715–735; these read AFFN…ENGA and VIIA…FFAY.

The protein to M.pneumoniae MPN_333.

The protein localises to the cell membrane. This is an uncharacterized protein from Mycoplasma pneumoniae (strain ATCC 29342 / M129 / Subtype 1) (Mycoplasmoides pneumoniae).